Here is a 501-residue protein sequence, read N- to C-terminus: Cytochrome P450 7A1 (501 aa).

The chain crosses the membrane as a helical span at residues 4-24; the sequence is IFWIWGICLSVCCCLWLILGL. Cys-441 contributes to the heme binding site.

It belongs to the cytochrome P450 family. It depends on heme as a cofactor. Detected in liver.

It is found in the endoplasmic reticulum membrane. The protein resides in the microsome membrane. It catalyses the reaction cholesterol + reduced [NADPH--hemoprotein reductase] + O2 = 7alpha-hydroxycholesterol + oxidized [NADPH--hemoprotein reductase] + H2O + H(+). The enzyme catalyses 4beta-hydroxycholesterol + reduced [NADPH--hemoprotein reductase] + O2 = 4beta,7alpha-dihydroxycholesterol + oxidized [NADPH--hemoprotein reductase] + H2O + H(+). The catalysed reaction is lathosterol + reduced [NADPH--hemoprotein reductase] + O2 = 7alpha,8alpha-epoxy-5alpha-cholestan-3beta-ol + oxidized [NADPH--hemoprotein reductase] + H2O + H(+). It carries out the reaction lathosterol + reduced [NADPH--hemoprotein reductase] + O2 = 5alpha-cholestan-7-oxo-3beta-ol + oxidized [NADPH--hemoprotein reductase] + H2O + H(+). It catalyses the reaction 7-dehydrocholesterol + reduced [NADPH--hemoprotein reductase] + O2 = 7-oxocholesterol + oxidized [NADPH--hemoprotein reductase] + H2O + H(+). The enzyme catalyses (24S)-hydroxycholesterol + reduced [NADPH--hemoprotein reductase] + O2 = (24S)-7alpha-dihydroxycholesterol + oxidized [NADPH--hemoprotein reductase] + H2O + H(+). The catalysed reaction is (24R)-hydroxycholesterol + reduced [NADPH--hemoprotein reductase] + O2 = (24R)-7alpha-dihydroxycholesterol + oxidized [NADPH--hemoprotein reductase] + H2O + H(+). Its pathway is lipid metabolism; bile acid biosynthesis. The protein operates within steroid metabolism; cholesterol degradation. A cytochrome P450 monooxygenase involved in the metabolism of endogenous cholesterol and its oxygenated derivatives (oxysterols). Mechanistically, uses molecular oxygen inserting one oxygen atom into a substrate, and reducing the second into a water molecule, with two electrons provided by NADPH via cytochrome P450 reductase (CPR; NADPH-ferrihemoprotein reductase). Functions as a critical regulatory enzyme of bile acid biosynthesis and cholesterol homeostasis. Catalyzes the hydroxylation of carbon hydrogen bond at 7-alpha position of cholesterol, a rate-limiting step in cholesterol catabolism and bile acid biosynthesis. 7-alpha hydroxylates several oxysterols, including 4beta-hydroxycholesterol and 24-hydroxycholesterol. Catalyzes the oxidation of the 7,8 double bond of 7-dehydrocholesterol and lathosterol with direct and predominant formation of the 7-keto derivatives. The protein is Cytochrome P450 7A1 (CYP7A1) of Oryctolagus cuniculus (Rabbit).